Here is a 41-residue protein sequence, read N- to C-terminus: Large ribosomal subunit protein bL36 (41 aa).

Belongs to the bacterial ribosomal protein bL36 family.

The polypeptide is Large ribosomal subunit protein bL36 (Sinorhizobium fredii (strain NBRC 101917 / NGR234)).